Consider the following 290-residue polypeptide: UPF0761 membrane protein YihY (290 aa).

The Cytoplasmic segment spans residues 1–43 (MLKTVHQKAGRHTRPVRAWLKLLWQRIDEDNMTTLAGNLAYVS). The chain crosses the membrane as a helical span at residues 44–64 (LLSLVPLIAVVFALFAAFPMF). Residues 65 to 103 (SDVSIQLRHFIFANFMPATGDVIQRYIEQFVANSNKMTA) are Periplasmic-facing. A helical membrane pass occupies residues 104–124 (VGACGLIVTALLLMYAIDSAL). Residues 125-139 (NTIWRSKRTRPKVYS) are Cytoplasmic-facing. A helical transmembrane segment spans residues 140–160 (FAVYWMILTLGPLLAGVSLAI). Residues 161 to 179 (SSYLLSLRWASDLNTVIDN) are Periplasmic-facing. A helical membrane pass occupies residues 180-200 (VLHILPLLLSWISFWLLYSIV). Residues 201–209 (PTTRVPNRD) are Cytoplasmic-facing. A helical transmembrane segment spans residues 210-230 (ALVGAFVAALLFEAGKKGFAL). Over 231–243 (YITMFPSYQLIYG) the chain is Periplasmic. The chain crosses the membrane as a helical span at residues 244-264 (VLAVIPILFVWVYWTWCIVLL). At 265–290 (GAEITVTLGEYRKLKQAAEQEEADQP) the chain is on the cytoplasmic side.

This sequence belongs to the UPF0761 family.

It localises to the cell inner membrane. This chain is UPF0761 membrane protein YihY, found in Salmonella typhimurium (strain LT2 / SGSC1412 / ATCC 700720).